We begin with the raw amino-acid sequence, 297 residues long: Trans-enoyl reductase TOXD (297 aa).

NADP(+)-binding positions include 162 to 165 (STAT) and Tyr203.

Belongs to the zinc-containing alcohol dehydrogenase family. In terms of assembly, monomer.

Its function is as follows. Trans-enoyl reductase; part of the diffuse TOX2 gene cluster that mediates the biosynthesis of the HC-toxin, cyclic tetrapeptide of structure cyclo(D-Pro-L-Ala-D-Ala-L-Aeo), where Aeo stands for 2-amino-9,10-epoxi-8-oxodecanoic acid. HC-toxin is a determinant of specificity and virulence in the interaction between the producing fungus and its host, maize. TOXD does not seem to play a role in HC-toxin biosynthesis. The protein is Trans-enoyl reductase TOXD of Cochliobolus carbonum (Maize leaf spot fungus).